The sequence spans 379 residues: MSAGNGTPWGSAAGEESWAASGVAVEGSELPTFSAAAKVRVGVTIVLFVSSAGGNLAVLWSVTRPQPSQLRPSPVRTLFAHLAAADLLVTFVVMPLDATWNITVQWLAEDIACRTLMFLKLMAMYSAAFLPVVIGLDRQAAVLNPLGSRSGVRKLLGAAWGLSFLLALPQLFLFHTVHRAGPVPFTQCVTKGSFKARWQETTYNLFTFRCLFLLPLTAMAICYSHIVLSVSSPQTRKGSHAPAGEFALCRSFDNCPRVRLWALRLALLILLTFILCWTPYYLLGLWYWFSPTMLTEVPPSLSHILFLFGLLNAPLDPLLYGAFTLGCQRGHQELSIDSSNEGSGRMLQQEIHALRQQEVQKTVTSRSAGETKDISITSI.

Residues 1 to 40 lie on the Extracellular side of the membrane; that stretch reads MSAGNGTPWGSAAGEESWAASGVAVEGSELPTFSAAAKVR. Residues 41–60 form a helical membrane-spanning segment; sequence VGVTIVLFVSSAGGNLAVLW. Residues 61–76 lie on the Cytoplasmic side of the membrane; that stretch reads SVTRPQPSQLRPSPVR. The helical transmembrane segment at 77–96 threads the bilayer; it reads TLFAHLAAADLLVTFVVMPL. Topologically, residues 97–114 are extracellular; that stretch reads DATWNITVQWLAEDIACR. The N-linked (GlcNAc...) asparagine glycan is linked to asparagine 101. A disulfide bond links cysteine 113 and cysteine 188. A helical membrane pass occupies residues 115–136; it reads TLMFLKLMAMYSAAFLPVVIGL. Residues 137–160 are Cytoplasmic-facing; that stretch reads DRQAAVLNPLGSRSGVRKLLGAAW. A helical transmembrane segment spans residues 161-178; that stretch reads GLSFLLALPQLFLFHTVH. Residues 179-204 lie on the Extracellular side of the membrane; it reads RAGPVPFTQCVTKGSFKARWQETTYN. Residues 205–224 form a helical membrane-spanning segment; sequence LFTFRCLFLLPLTAMAICYS. Residues 225–278 lie on the Cytoplasmic side of the membrane; sequence HIVLSVSSPQTRKGSHAPAGEFALCRSFDNCPRVRLWALRLALLILLTFILCWT. A helical transmembrane segment spans residues 279 to 297; that stretch reads PYYLLGLWYWFSPTMLTEV. The Extracellular segment spans residues 298–303; that stretch reads PPSLSH. The chain crosses the membrane as a helical span at residues 304-323; that stretch reads ILFLFGLLNAPLDPLLYGAF. At 324-379 the chain is on the cytoplasmic side; sequence TLGCQRGHQELSIDSSNEGSGRMLQQEIHALRQQEVQKTVTSRSAGETKDISITSI.

This sequence belongs to the G-protein coupled receptor 1 family. In terms of processing, phosphorylated on the C-terminal cytoplasmic tail.

It localises to the cell membrane. Functionally, receptor for gonadotropin releasing hormone II (GnRH II). This receptor mediates its action by association with G proteins that activate a phosphatidylinositol-calcium second messenger system. In Macaca mulatta (Rhesus macaque), this protein is Gonadotropin-releasing hormone II receptor (GNRHR2).